The following is a 324-amino-acid chain: Alkanal monooxygenase beta chain (324 aa).

This sequence belongs to the bacterial luciferase oxidoreductase family. In terms of assembly, heterodimer of an alpha and a beta chain.

It catalyses the reaction a long-chain fatty aldehyde + FMNH2 + O2 = a long-chain fatty acid + hnu + FMN + H2O + 2 H(+). Functionally, light-emitting reaction in luminous bacteria. The specific role of the beta subunit is unknown, but it is absolutely required for bioluminescence activity. This Vibrio harveyi (Beneckea harveyi) protein is Alkanal monooxygenase beta chain (luxB).